The sequence spans 268 residues: 4-hydroxy-tetrahydrodipicolinate reductase (268 aa).

Residues 10–15 (GASGRM) and D36 contribute to the NAD(+) site. R37 serves as a coordination point for NADP(+). NAD(+) contacts are provided by residues 99–101 (GTT) and 123–126 (SANM). H156 acts as the Proton donor/acceptor in catalysis. Position 157 (H157) interacts with (S)-2,3,4,5-tetrahydrodipicolinate. Catalysis depends on K160, which acts as the Proton donor. A (S)-2,3,4,5-tetrahydrodipicolinate-binding site is contributed by 166–167 (GT).

The protein belongs to the DapB family.

It localises to the cytoplasm. The catalysed reaction is (S)-2,3,4,5-tetrahydrodipicolinate + NAD(+) + H2O = (2S,4S)-4-hydroxy-2,3,4,5-tetrahydrodipicolinate + NADH + H(+). The enzyme catalyses (S)-2,3,4,5-tetrahydrodipicolinate + NADP(+) + H2O = (2S,4S)-4-hydroxy-2,3,4,5-tetrahydrodipicolinate + NADPH + H(+). It functions in the pathway amino-acid biosynthesis; L-lysine biosynthesis via DAP pathway; (S)-tetrahydrodipicolinate from L-aspartate: step 4/4. Its function is as follows. Catalyzes the conversion of 4-hydroxy-tetrahydrodipicolinate (HTPA) to tetrahydrodipicolinate. This is 4-hydroxy-tetrahydrodipicolinate reductase from Burkholderia thailandensis (strain ATCC 700388 / DSM 13276 / CCUG 48851 / CIP 106301 / E264).